The sequence spans 324 residues: Leucine carboxyl methyltransferase 1 (324 aa).

S-adenosyl-L-methionine-binding positions include arginine 74, glycine 101, aspartate 128, 172 to 173 (DL), and glutamate 196.

This sequence belongs to the methyltransferase superfamily. LCMT family.

It catalyses the reaction [phosphatase 2A protein]-C-terminal L-leucine + S-adenosyl-L-methionine = [phosphatase 2A protein]-C-terminal L-leucine methyl ester + S-adenosyl-L-homocysteine. Methylates the carboxyl group of the C-terminal leucine residue of protein phosphatase 2A catalytic subunits to form alpha-leucine ester residues. The protein is Leucine carboxyl methyltransferase 1 (PPM1) of Yarrowia lipolytica (strain CLIB 122 / E 150) (Yeast).